A 428-amino-acid chain; its full sequence is GTPase Obg (428 aa).

The region spanning 1 to 158 (MFVDQTKIDV…RTLRLELKVL (158 aa)) is the Obg domain. One can recognise an OBG-type G domain in the interval 159–328 (ADVGLVGFPS…LMGKTADLVE (170 aa)). GTP-binding positions include 165 to 172 (GFPSVGKS), 190 to 194 (FTTLT), 212 to 215 (DLPG), 282 to 285 (TQMD), and 309 to 311 (SSV). Positions 172 and 192 each coordinate Mg(2+). The region spanning 350-428 (YKKPEDDGFK…IADFTFEFVD (79 aa)) is the OCT domain.

Belongs to the TRAFAC class OBG-HflX-like GTPase superfamily. OBG GTPase family. As to quaternary structure, monomer. Requires Mg(2+) as cofactor.

Its subcellular location is the cytoplasm. In terms of biological role, an essential GTPase which binds GTP, GDP and possibly (p)ppGpp with moderate affinity, with high nucleotide exchange rates and a fairly low GTP hydrolysis rate. Plays a role in control of the cell cycle, stress response, ribosome biogenesis and in those bacteria that undergo differentiation, in morphogenesis control. The chain is GTPase Obg from Lactobacillus gasseri (strain ATCC 33323 / DSM 20243 / BCRC 14619 / CIP 102991 / JCM 1131 / KCTC 3163 / NCIMB 11718 / NCTC 13722 / AM63).